The following is a 212-amino-acid chain: 2,3-bisphosphoglycerate-dependent phosphoglycerate mutase (212 aa).

Substrate contacts are provided by residues 9–16 (RHGQSEWN), 22–23 (TG), Arg61, 88–91 (ERDY), Lys99, 115–116 (RR), and 159–160 (GN). Residue His10 is the Tele-phosphohistidine intermediate of the active site. Glu88 serves as the catalytic Proton donor/acceptor.

It belongs to the phosphoglycerate mutase family. BPG-dependent PGAM subfamily. As to quaternary structure, homodimer.

The enzyme catalyses (2R)-2-phosphoglycerate = (2R)-3-phosphoglycerate. It participates in carbohydrate degradation; glycolysis; pyruvate from D-glyceraldehyde 3-phosphate: step 3/5. In terms of biological role, catalyzes the interconversion of 2-phosphoglycerate and 3-phosphoglycerate. This Methylorubrum populi (strain ATCC BAA-705 / NCIMB 13946 / BJ001) (Methylobacterium populi) protein is 2,3-bisphosphoglycerate-dependent phosphoglycerate mutase.